The chain runs to 523 residues: Asc-type amino acid transporter 1 (523 aa).

Residues 1-28 form a disordered region; the sequence is MAGHTQQPSGRGNPRPAPSPSPVPGTVP. The segment covering 15-25 has biased composition (pro residues); sequence RPAPSPSPVPG. A run of 9 helical transmembrane segments spans residues 40–60, 72–92, 113–133, 268–288, 310–330, 362–382, 388–408, 424–444, and 448–468; these read IGLL…GIFI, VGLA…GSLC, IFGG…MYPT, AIFI…IAYF, LLGY…FGGI, CTPI…MLVG, INYV…GLLL, LLIP…SFIS, and VCGV…LGVF. Residues 499-523 form a disordered region; it reads APEEEENGPCPPSLLPATDKPSKPQ.

The protein belongs to the amino acid-polyamine-organocation (APC) superfamily. In terms of assembly, disulfide-linked heterodimer with the amino acid transport protein SLC3A2/4F2hc. In terms of tissue distribution, expressed in brain, heart, kidney, liver, lung, pancreas, placenta, and skeletal muscle.

The protein localises to the cell membrane. It catalyses the reaction L-alanine(in) + glycine(out) = L-alanine(out) + glycine(in). The enzyme catalyses L-serine(out) + L-alanine(in) = L-serine(in) + L-alanine(out). The catalysed reaction is L-threonine(out) + L-alanine(in) = L-threonine(in) + L-alanine(out). It carries out the reaction L-cysteine(out) + L-alanine(in) = L-cysteine(in) + L-alanine(out). It catalyses the reaction 2-aminoisobutanoate(out) + L-alanine(in) = 2-aminoisobutanoate(in) + L-alanine(out). The enzyme catalyses D-serine(out) + L-alanine(in) = D-serine(in) + L-alanine(out). The catalysed reaction is D-alanine(out) + L-alanine(in) = D-alanine(in) + L-alanine(out). It carries out the reaction L-valine(out) + L-alanine(in) = L-valine(in) + L-alanine(out). It catalyses the reaction L-methionine(out) + L-alanine(in) = L-methionine(in) + L-alanine(out). The enzyme catalyses beta-alanine(out) + L-alanine(in) = beta-alanine(in) + L-alanine(out). The catalysed reaction is D-cysteine(out) + L-alanine(in) = D-cysteine(in) + L-alanine(out). It carries out the reaction D-threonine(out) + L-alanine(in) = D-threonine(in) + L-alanine(out). It catalyses the reaction D-isoleucine(out) + D-serine(in) = D-isoleucine(in) + D-serine(out). The enzyme catalyses D-serine(in) = D-serine(out). Its function is as follows. Associates with SLC3A2/4F2hc to form a functional heterodimeric complex that translocates small neutral L- and D-amino acids across the plasma membrane. Preferentially mediates exchange transport, but can also operate via facilitated diffusion. Acts as a major transporter for glycine, L- and D-serine in the central nervous system. At the spinal cord and brainstem regulates glycine metabolism and glycinergic inhibitory neurotransmission by providing for glycine de novo synthesis from L-serine and glycine recycling from astrocytes to glycinergic motor neurons. At Schaffer collateral-CA1 synapses mediates D-serine and glycine release that modulates post-synaptic activation of NMDA receptors and excitatory glutamatergic transmission. May regulate D-serine release from mesenchymal progenitors located in developing subcutaneous adipose tissue, favoring white adipocyte over thermogenic beige adipocyte lineage commitment. In Homo sapiens (Human), this protein is Asc-type amino acid transporter 1 (SLC7A10).